Here is a 136-residue protein sequence, read N- to C-terminus: Outer envelope pore protein 16-4, chloroplastic (136 aa).

The contains 4 beta strands stretch occupies residues 1 to 59; the sequence is MEEELLSAVPCSSLTVESVLRVATAGGLYGLCAGPRDARKIGLSGVSQASFVAKSIGRF. 4 helical membrane passes run 18–34, 56–72, 86–102, and 110–126; these read SVLRVATAGGLYGLCAG, IGRFGFQCGLVSGVFTM, WVNALVGGAVAGAAVAI, and VVGMAGLVSAFSVLANC.

This sequence belongs to the Tim17/Tim22/Tim23 family. Plastid outer envelope porin OEP16 (TC 1.B.30) subfamily. Homodimer and oligomers in membrane.

The protein resides in the plastid. Its subcellular location is the chloroplast outer membrane. Voltage-dependent high-conductance channel with a slight cation-selectivity; selective for amino acids but excludes triosephosphates or uncharged sugars. Non-essential amino acid-selective channel protein and translocation pore for NADPH:protochlorophyllide oxidoreductase A (PORA) and possibly PORB. In Arabidopsis thaliana (Mouse-ear cress), this protein is Outer envelope pore protein 16-4, chloroplastic (OEP164).